Here is a 971-residue protein sequence, read N- to C-terminus: Mating-type switching protein swi1 (971 aa).

A phosphoserine mark is found at serine 528, serine 536, and serine 970.

As to quaternary structure, fork protection complex (FPC) consisting of swi1 and swi3 interacts with mat1 cis-acting sequences and mat1-proximal polar-terminator of replication (RTS1).

Its subcellular location is the nucleus. Its function is as follows. Forms a fork protection complex (FPC) with swi3. FPC coordinates leading and lagging strand synthesis and moves with the replication fork. It is required for programmed fork-pausing which is necessary for mating-type switching. FPC stabilizes replication forks in a configuration that is recognized by replication checkpoint sensors. It is involved in termination at the mat1-proximal polar-terminator of replication (RTS1) and also required for activation of the Rad53-like checkpoint kinase cds1. The chain is Mating-type switching protein swi1 (swi1) from Schizosaccharomyces pombe (strain 972 / ATCC 24843) (Fission yeast).